A 368-amino-acid chain; its full sequence is Endoglucanase (368 aa).

The first 21 residues, 1 to 21, serve as a signal peptide directing secretion; sequence MNVLRSGLVTMLLLAAFSVQA. E55 functions as the Proton donor in the catalytic mechanism. The active-site Nucleophile is the D116.

It belongs to the glycosyl hydrolase 8 (cellulase D) family.

The protein resides in the secreted. The enzyme catalyses Endohydrolysis of (1-&gt;4)-beta-D-glucosidic linkages in cellulose, lichenin and cereal beta-D-glucans.. It participates in glycan metabolism; bacterial cellulose biosynthesis. In terms of biological role, hydrolyzes carboxymethylcellulose. This chain is Endoglucanase (bcsZ), found in Escherichia coli O157:H7.